The chain runs to 331 residues: Glucokinase (331 aa).

An ATP-binding site is contributed by 14–19 (GDIGGT).

This sequence belongs to the bacterial glucokinase family.

The protein resides in the cytoplasm. It catalyses the reaction D-glucose + ATP = D-glucose 6-phosphate + ADP + H(+). This chain is Glucokinase, found in Aromatoleum aromaticum (strain DSM 19018 / LMG 30748 / EbN1) (Azoarcus sp. (strain EbN1)).